We begin with the raw amino-acid sequence, 593 residues long: Dolichyl-phosphooligosaccharide-protein glycotransferase 2 (593 aa).

Residues 1–12 (MTPVGMDRKSLS) are Cytoplasmic-facing. Residues 13–33 (LLILIVLLGLCIRLQNFGEIF) traverse the membrane as a helical segment. The Extracellular segment spans residues 34-98 (DSRIYYYGYD…GLFLGFWASE (65 aa)). The short motif at 41 to 43 (GYD) is the DXD motif 1 element. Residue D43 coordinates Mn(2+). The chain crosses the membrane as a helical span at residues 99–119 (IFAVVFPVIIGVLCIVLVYLI). At 120 to 128 (SLEVLRNEK) the chain is on the cytoplasmic side. Residues 129 to 149 (FALISAFIFSVCPVTVWKSLL) traverse the membrane as a helical segment. Residues 150 to 154 (GKADH) lie on the Extracellular side of the membrane. Residue D153 coordinates Mn(2+). The DXD motif 2 signature appears at 153–155 (DHH). H154 contacts a glycophospholipid. Position 155 (H155) interacts with Mn(2+). Residues 155-175 (HIWVVFLLLLSIWLVTKPGLL) traverse the membrane as a helical segment. The Cytoplasmic portion of the chain corresponds to 176 to 180 (KLLSG). The chain crosses the membrane as a helical span at residues 181–201 (IPMLLMALSWLGAPIYAALLA). Residues 202-229 (VSSLFQFNEKEVRIVGISNLIPVLSSIQ) lie on the Extracellular side of the membrane. A helical membrane pass occupies residues 230–250 (NLFLGFSFLAIAVFLLVGSFV). The Cytoplasmic portion of the chain corresponds to 251-265 (KRFERRFRYAIVYYL). A helical membrane pass occupies residues 266–286 (CICSVALLSAYLMPVGWLGFV). Topologically, residues 287 to 310 (KSGISYVLGTDIYLPTIREARSFQ) are extracellular. Residues 302-305 (TIRE) carry the TIXE motif motif. The helical transmembrane segment at 311 to 331 (ILGVISSAGYLFFVLAIPALF) threads the bilayer. A topological domain (cytoplasmic) is located at residue M332. The helical transmembrane segment at 333–353 (LRNGFLKVFFVLSFLISILQL) threads the bilayer. Position 354 (R354) is a topological domain, extracellular. R354 provides a ligand contact to a glycophospholipid. Residues 355-375 (FVEVLAFPVAILASYTICQIL) form a helical membrane-spanning segment. At 376-411 (ERVDYPVFRKEEEGESKRRGRKEKKKAVEIRKKDHA) the chain is on the cytoplasmic side. Residues 412-432 (TVIAFLLFLALPCFANSLAPV) form a helical membrane-spanning segment. Residues 433-593 (EMTMDWKEAL…FGTVKIFEVK (161 aa)) are Extracellular-facing. Residues 468-470 (WWD) are interacts with target acceptor peptide in protein substrate. Positions 468-472 (WWDYG) match the WWDYG motif motif. The DKi motif signature appears at 524 to 539 (ELTVKPETNKTKFIPI).

It belongs to the STT3 family. Mn(2+) serves as cofactor. It depends on Mg(2+) as a cofactor. Requires Zn(2+) as cofactor.

The protein resides in the cell membrane. The enzyme catalyses an archaeal dolichyl phosphooligosaccharide + [protein]-L-asparagine = an archaeal dolichyl phosphate + a glycoprotein with the oligosaccharide chain attached by N-beta-D-glycosyl linkage to a protein L-asparagine.. It participates in protein modification; protein glycosylation. In terms of biological role, oligosaccharyl transferase (OST) that catalyzes the initial transfer of a defined glycan (a GalNAc-linked heptasaccharide composed of 4 Hex, 3 dHex and a sulfate for A.fulgidus AglB-S) from the lipid carrier dolichol-monophosphate to an asparagine residue within an Asn-X-Ser/Thr consensus motif in nascent polypeptide chains, the first step in protein N-glycosylation. The polypeptide is Dolichyl-phosphooligosaccharide-protein glycotransferase 2 (aglB2) (Archaeoglobus fulgidus (strain ATCC 49558 / DSM 4304 / JCM 9628 / NBRC 100126 / VC-16)).